A 345-amino-acid chain; its full sequence is MRWKRTIQLLDVHCEGEIGRVAIGGVPKIPGNTVAEQLHWLNTDPKGEELRRFLVLEPRGAPIGSVNLLLPARHPDADAAFIILQPDQAHASSGSNSICVTTALLESGIVEMKEPETVVTLETAAGLVRATATCRDGRCEKVRLTMVPSFVHELDVGIDTPQWGRIKLDLCYGGIFYALVDVGQIGLTIGKANAASLVQAGMVLKELINRTVPVVHPEIPAISGVAYVMFRDIDADGAIRTCTTMWPGRADRSPCGTGNSANLATLHARGKARVGDVFKSRSIIGSEFEVGLQAETEVAGKPAIIPTITGRGFTFGLSQVALDPFDPMANGFALTDVWGPLAGDI.

Glutamine 85 contacts substrate. Catalysis depends on serine 93, which acts as the Proton acceptor. Substrate is bound by residues 94 to 95 (GS) and aspartate 251. The active-site Proton donor is the cysteine 255. 256–257 (GT) provides a ligand contact to substrate.

This sequence belongs to the proline racemase family.

It carries out the reaction trans-4-hydroxy-L-proline = cis-4-hydroxy-D-proline. In terms of biological role, catalyzes the epimerization of trans-4-hydroxy-L-proline (t4LHyp) to cis-4-hydroxy-D-proline (c4DHyp). May be involved in a degradation pathway of t4LHyp. Can also catalyze the epimerization of trans-3-hydroxy-L-proline (t3LHyp) to cis-3-hydroxy-D-proline (c3DHyp) in vitro. Displays no proline racemase activity. This is 4-hydroxyproline 2-epimerase 1 from Rhizobium rhizogenes (strain K84 / ATCC BAA-868) (Agrobacterium radiobacter).